The following is a 158-amino-acid chain: Urease accessory protein UreE (158 aa).

This sequence belongs to the UreE family.

Its subcellular location is the cytoplasm. Its function is as follows. Involved in urease metallocenter assembly. Binds nickel. Probably functions as a nickel donor during metallocenter assembly. The sequence is that of Urease accessory protein UreE from Microcystis aeruginosa (strain NIES-843 / IAM M-2473).